Consider the following 425-residue polypeptide: tRNA(Met) cytidine acetate ligase (425 aa).

Residues 7–20, glycine 102, asparagine 165, and 190–191 each bind ATP; these read IVEY…HLYH and RI.

The protein belongs to the TmcAL family.

The protein localises to the cytoplasm. It carries out the reaction cytidine(34) in elongator tRNA(Met) + acetate + ATP = N(4)-acetylcytidine(34) in elongator tRNA(Met) + AMP + diphosphate. In terms of biological role, catalyzes the formation of N(4)-acetylcytidine (ac(4)C) at the wobble position of elongator tRNA(Met), using acetate and ATP as substrates. First activates an acetate ion to form acetyladenylate (Ac-AMP) and then transfers the acetyl group to tRNA to form ac(4)C34. This chain is tRNA(Met) cytidine acetate ligase, found in Thermosipho melanesiensis (strain DSM 12029 / CIP 104789 / BI429).